The following is a 734-amino-acid chain: Photosystem I P700 chlorophyll a apoprotein A2 (734 aa).

8 helical membrane passes run 46–69 (IFASHFGQLAIIFLWTSGNLFHVA), 135–158 (LYTGALFLLFLSAISLIAGWLHLQ), 175–199 (LNHHLSGLFGVSSLAWTGHLVHVAI), 273–291 (MAHHHLAIAFIFLVAGHMY), 330–353 (LHFQLGLALASLGVITSLVAQHMY), 369–395 (AALYTHHQYIAGFIMTGAFAHGAIFFI), 417–439 (AIISHLSWASLFLGFHTLGLYVH), and 517–535 (FLVHHAIALGLHTTTLILV). Positions 559 and 568 each coordinate [4Fe-4S] cluster. 2 helical membrane passes run 575–596 (AFYLAVFWMLNTIGWVTFYWHW) and 643–665 (LSVWAWMFLFGHLVWATGFMFLI). His654, Met662, and Tyr670 together coordinate chlorophyll a. Position 671 (Trp671) interacts with phylloquinone. The chain crosses the membrane as a helical span at residues 707-727 (LVGLAHFSVGYIFTYAAFLIA).

This sequence belongs to the PsaA/PsaB family. The PsaA/B heterodimer binds the P700 chlorophyll special pair and subsequent electron acceptors. PSI consists of a core antenna complex that captures photons, and an electron transfer chain that converts photonic excitation into a charge separation. The eukaryotic PSI reaction center is composed of at least 11 subunits. P700 is a chlorophyll a/chlorophyll a' dimer, A0 is one or more chlorophyll a, A1 is one or both phylloquinones and FX is a shared 4Fe-4S iron-sulfur center. serves as cofactor.

The protein localises to the plastid. It is found in the chloroplast thylakoid membrane. It carries out the reaction reduced [plastocyanin] + hnu + oxidized [2Fe-2S]-[ferredoxin] = oxidized [plastocyanin] + reduced [2Fe-2S]-[ferredoxin]. Its function is as follows. PsaA and PsaB bind P700, the primary electron donor of photosystem I (PSI), as well as the electron acceptors A0, A1 and FX. PSI is a plastocyanin-ferredoxin oxidoreductase, converting photonic excitation into a charge separation, which transfers an electron from the donor P700 chlorophyll pair to the spectroscopically characterized acceptors A0, A1, FX, FA and FB in turn. Oxidized P700 is reduced on the lumenal side of the thylakoid membrane by plastocyanin. The polypeptide is Photosystem I P700 chlorophyll a apoprotein A2 (Solanum tuberosum (Potato)).